Reading from the N-terminus, the 266-residue chain is ATP synthase subunit a (266 aa).

The next 5 helical transmembrane spans lie at 28 to 48 (SINVDSMFFSIALGILFLVIF), 88 to 108 (LIAPLALTIFVWVFLMNLMDL), 141 to 161 (DVNITLSMALGVFILVLFYSI), 206 to 226 (LFGNMYAGELIFILIAGLLPW), and 237 to 257 (AIFHILIITLQAFIFMVLTVV).

The protein belongs to the ATPase A chain family. As to quaternary structure, F-type ATPases have 2 components, CF(1) - the catalytic core - and CF(0) - the membrane proton channel. CF(1) has five subunits: alpha(3), beta(3), gamma(1), delta(1), epsilon(1). CF(0) has three main subunits: a(1), b(2) and c(9-12). The alpha and beta chains form an alternating ring which encloses part of the gamma chain. CF(1) is attached to CF(0) by a central stalk formed by the gamma and epsilon chains, while a peripheral stalk is formed by the delta and b chains.

Its subcellular location is the cell inner membrane. In terms of biological role, key component of the proton channel; it plays a direct role in the translocation of protons across the membrane. The chain is ATP synthase subunit a from Pectobacterium carotovorum subsp. carotovorum (strain PC1).